We begin with the raw amino-acid sequence, 126 residues long: Small ribosomal subunit protein uS11 (126 aa).

It belongs to the universal ribosomal protein uS11 family. As to quaternary structure, part of the 30S ribosomal subunit.

In terms of biological role, located on the platform of the 30S subunit. The polypeptide is Small ribosomal subunit protein uS11 (Methanosarcina acetivorans (strain ATCC 35395 / DSM 2834 / JCM 12185 / C2A)).